The chain runs to 93 residues: UPF0223 protein LACR_0546 (93 aa).

This sequence belongs to the UPF0223 family.

This Lactococcus lactis subsp. cremoris (strain SK11) protein is UPF0223 protein LACR_0546.